The primary structure comprises 827 residues: Periplasmic nitrate reductase (827 aa).

Positions 1-32 (MELSRRDFMKANAAVAAAAAAGIVLPVKNVQA) form a signal peptide, tat-type signal. A 4Fe-4S Mo/W bis-MGD-type domain is found at 37–93 (IKWDKAPCRFCGTGCSVLVGTKDGRVVATQGDPDAEVNRGLNCIKGYFLSKIMYGAD). [4Fe-4S] cluster-binding residues include cysteine 44, cysteine 47, cysteine 51, and cysteine 79. Mo-bis(molybdopterin guanine dinucleotide) contacts are provided by residues lysine 81, glutamine 148, asparagine 173, cysteine 177, 210 to 217 (WGSNMAEM), 241 to 245 (STFEH), methionine 371, glutamine 375, asparagine 481, 507 to 508 (SD), lysine 530, aspartate 557, and 717 to 726 (TGRVLEHWHT). Position 793 (phenylalanine 793) interacts with substrate. Positions 801 and 818 each coordinate Mo-bis(molybdopterin guanine dinucleotide).

Belongs to the prokaryotic molybdopterin-containing oxidoreductase family. NasA/NapA/NarB subfamily. Component of the periplasmic nitrate reductase NapAB complex composed of NapA and NapB. [4Fe-4S] cluster serves as cofactor. The cofactor is Mo-bis(molybdopterin guanine dinucleotide). In terms of processing, predicted to be exported by the Tat system. The position of the signal peptide cleavage has not been experimentally proven.

It is found in the periplasm. It catalyses the reaction 2 Fe(II)-[cytochrome] + nitrate + 2 H(+) = 2 Fe(III)-[cytochrome] + nitrite + H2O. Its function is as follows. Catalytic subunit of the periplasmic nitrate reductase complex NapAB. Receives electrons from NapB and catalyzes the reduction of nitrate to nitrite. In Haemophilus ducreyi (strain 35000HP / ATCC 700724), this protein is Periplasmic nitrate reductase.